Consider the following 28-residue polypeptide: Beta-bungarotoxin B chain-like (28 aa).

The first 24 residues, 1–24 (MSSGGLLLLLGLLTLCAELTPVSS), serve as a signal peptide directing secretion.

In terms of assembly, heterodimer; disulfide-linked. The A chains have phospholipase A2 activity and the B chains show homology with the basic protease inhibitors. Expressed by the venom gland.

The protein resides in the secreted. Functionally, beta-1-bungarotoxin is a presynaptic neurotoxin of the venom. The B chain is homologous to venom basic protease inhibitors but has no protease inhibitor activity and blocks voltage-gated potassium channels (Kv). This chain is Beta-bungarotoxin B chain-like, found in Bungarus multicinctus (Many-banded krait).